Here is a 677-residue protein sequence, read N- to C-terminus: Histidine ammonia-lyase (677 aa).

Positions 269–271 (CSG) form a cross-link, 5-imidazolinone (Cys-Gly). Serine 270 is subject to 2,3-didehydroalanine (Ser).

The protein belongs to the PAL/histidase family. Post-translationally, contains an active site 4-methylidene-imidazol-5-one (MIO), which is formed autocatalytically by cyclization and dehydration of residues Cys-Ser-Gly.

It carries out the reaction L-histidine = trans-urocanate + NH4(+). It functions in the pathway amino-acid degradation; L-histidine degradation into L-glutamate; N-formimidoyl-L-glutamate from L-histidine: step 1/3. The chain is Histidine ammonia-lyase from Caenorhabditis elegans.